A 30-amino-acid chain; its full sequence is Ribonuclease pancreatic (30 aa).

Basic and acidic residues predominate over residues 1-13; sequence KETAAAKFERQHM. Residues 1–21 form a disordered region; sequence KETAAAKFERQHMDPAPAAAX. 2 residues coordinate substrate: Lys-7 and Arg-10. The active-site Proton acceptor is the His-12.

The protein belongs to the pancreatic ribonuclease family. Monomer. Interacts with and forms tight 1:1 complexes with RNH1. Dimerization of two such complexes may occur. Interaction with RNH1 inhibits this protein. Pancreas.

Its subcellular location is the secreted. It catalyses the reaction an [RNA] containing cytidine + H2O = an [RNA]-3'-cytidine-3'-phosphate + a 5'-hydroxy-ribonucleotide-3'-[RNA].. The enzyme catalyses an [RNA] containing uridine + H2O = an [RNA]-3'-uridine-3'-phosphate + a 5'-hydroxy-ribonucleotide-3'-[RNA].. In terms of biological role, endonuclease that catalyzes the cleavage of RNA on the 3' side of pyrimidine nucleotides. Acts on single-stranded and double-stranded RNA. This Odocoileus virginianus virginianus (Virginia white-tailed deer) protein is Ribonuclease pancreatic (RNASE1).